The primary structure comprises 289 residues: Ferri-bacillibactin esterase BesA (289 aa).

Active-site charge relay system residues include serine 163, glutamate 225, and histidine 263.

The protein belongs to the esterase D family.

The protein resides in the cytoplasm. In terms of biological role, catalyzes the hydrolysis of the trilactone cycle of ferri-bacillibactin (ferri-BB) complex, leading to the formation of bacillibactin monomers and to cytosolic iron release, thus making iron available for metabolic use. Can also hydrolyze bacillibactin (BB), however the catalytic efficiency for ferri-BB hydrolysis is much higher than for BB. In Bacillus subtilis (strain 168), this protein is Ferri-bacillibactin esterase BesA (besA).